The chain runs to 252 residues: 1-(5-phosphoribosyl)-5-[(5-phosphoribosylamino)methylideneamino] imidazole-4-carboxamide isomerase (252 aa).

The active-site Proton acceptor is D8. The Proton donor role is filled by D129.

It belongs to the HisA/HisF family.

It localises to the cytoplasm. It catalyses the reaction 1-(5-phospho-beta-D-ribosyl)-5-[(5-phospho-beta-D-ribosylamino)methylideneamino]imidazole-4-carboxamide = 5-[(5-phospho-1-deoxy-D-ribulos-1-ylimino)methylamino]-1-(5-phospho-beta-D-ribosyl)imidazole-4-carboxamide. It functions in the pathway amino-acid biosynthesis; L-histidine biosynthesis; L-histidine from 5-phospho-alpha-D-ribose 1-diphosphate: step 4/9. The protein is 1-(5-phosphoribosyl)-5-[(5-phosphoribosylamino)methylideneamino] imidazole-4-carboxamide isomerase of Synechococcus sp. (strain RCC307).